The primary structure comprises 572 residues: Probable cysteine--tRNA ligase, mitochondrial (572 aa).

Cys-81 lines the Zn(2+) pocket. L-cysteine is bound at residue Gly-82. A 'HIGH' region motif is present at residues Pro-83–His-93. Thr-122 is an L-cysteine binding site. Residues Lys-127–Lys-130 carry the 'KIIK' region motif. Residues Cys-260, His-285, and Glu-289 each coordinate Zn(2+). His-285 is an L-cysteine binding site. The short motif at Lys-320 to Ser-324 is the 'KMSKS' region element. An ATP-binding site is contributed by Lys-323.

It belongs to the class-I aminoacyl-tRNA synthetase family. Zn(2+) is required as a cofactor.

It is found in the mitochondrion. The catalysed reaction is tRNA(Cys) + L-cysteine + ATP = L-cysteinyl-tRNA(Cys) + AMP + diphosphate. It carries out the reaction 2 L-cysteine = S-sulfanyl-L-cysteine + L-alanine. The enzyme catalyses S-sulfanyl-L-cysteine + L-cysteine = S-disulfanyl-L-cysteine + L-alanine. It catalyses the reaction S-sulfanyl-L-cysteine + tRNA(Cys) + ATP = (S)-sulfanyl-L-cysteinyl-tRNA(Cys) + AMP + diphosphate. The catalysed reaction is S-disulfanyl-L-cysteine + tRNA(Cys) + ATP = (S)-disulfanyl-L-cysteinyl-tRNA(Cys) + AMP + diphosphate. Mitochondrial cysteine-specific aminoacyl-tRNA synthetase that catalyzes the ATP-dependent ligation of cysteine to tRNA(Cys). Functionally, in addition to its role as an aminoacyl-tRNA synthetase, has also cysteine persulfide synthase activity. Produces reactive persulfide species such as cysteine persulfide (CysSSH) from substrate cysteine and mediate direct incorporation of CysSSH into proteins during translations, resulting in protein persulfides and polysulfides. CysSSHs behave as potent antioxidants and cellular protectants. This Xenopus tropicalis (Western clawed frog) protein is Probable cysteine--tRNA ligase, mitochondrial (cars2).